The sequence spans 305 residues: tRNA dimethylallyltransferase (305 aa).

An ATP-binding site is contributed by 8 to 15 (GPTASGKT). 10-15 (TASGKT) serves as a coordination point for substrate. The interaction with substrate tRNA stretch occupies residues 33–36 (DSQQ).

It belongs to the IPP transferase family. In terms of assembly, monomer. Mg(2+) serves as cofactor.

It carries out the reaction adenosine(37) in tRNA + dimethylallyl diphosphate = N(6)-dimethylallyladenosine(37) in tRNA + diphosphate. Its function is as follows. Catalyzes the transfer of a dimethylallyl group onto the adenine at position 37 in tRNAs that read codons beginning with uridine, leading to the formation of N6-(dimethylallyl)adenosine (i(6)A). This is tRNA dimethylallyltransferase from Anaeromyxobacter dehalogenans (strain 2CP-1 / ATCC BAA-258).